A 398-amino-acid polypeptide reads, in one-letter code: Selection and upkeep of intraepithelial T-cells protein 8 (398 aa).

A signal peptide spans 1 to 25 (MMKPEFSHFFGFCVYFLFLQVMASS). The Ig-like V-type domain occupies 26 to 141 (EKLRVTTPTR…DVAIMNLNVT (116 aa)). Topologically, residues 26–244 (EKLRVTTPTR…ANELFNQDYL (219 aa)) are extracellular. The cysteines at positions 49 and 123 are disulfide-linked. N-linked (GlcNAc...) asparagine glycans are attached at residues N92 and N139. One can recognise an Ig-like C1-type domain in the interval 142–233 (AVGLETEIHV…TGEEKQTSII (92 aa)). An intrachain disulfide couples C163 to C217. Residues 245–265 (WVGIFPFSVLSLILFGVLPFI) traverse the membrane as a helical segment. Residues 266 to 288 (NSFFRSQGCASGCLSKCLPVVTS) are Cytoplasmic-facing. The chain crosses the membrane as a helical span at residues 289–309 (WPVQIVHFLVCSGVLFAVYLP). The Extracellular segment spans residues 310–331 (HRYRVSLSDPQFPLYNNWITEL). Residues 332–352 (LIVILFLTICFVLPITVLLLI) form a helical membrane-spanning segment. The Cytoplasmic portion of the chain corresponds to 353 to 398 (KLSPTCLAKWEKNKDDIMDSQLGLGKAREASTLYEEQSRKSWEQEK).

It belongs to the SKINT family. As to expression, expressed in skin, thymus, testis and, to a lower extent, bladder, brain, heart, kidney, mammary gland, small intestine and uterus.

The protein resides in the membrane. May act by engaging a cell surface molecule on immature T-cells in the embryonic thymus. In Mus musculus (Mouse), this protein is Selection and upkeep of intraepithelial T-cells protein 8 (Skint8).